Consider the following 151-residue polypeptide: NADPH-dependent 7-cyano-7-deazaguanine reductase (151 aa).

The active-site Thioimide intermediate is the C51. D58 functions as the Proton donor in the catalytic mechanism. Residues 73-75 (VES) and 92-93 (HE) each bind substrate.

It belongs to the GTP cyclohydrolase I family. QueF type 1 subfamily.

Its subcellular location is the cytoplasm. It carries out the reaction 7-aminomethyl-7-carbaguanine + 2 NADP(+) = 7-cyano-7-deazaguanine + 2 NADPH + 3 H(+). It functions in the pathway tRNA modification; tRNA-queuosine biosynthesis. Its function is as follows. Catalyzes the NADPH-dependent reduction of 7-cyano-7-deazaguanine (preQ0) to 7-aminomethyl-7-deazaguanine (preQ1). The protein is NADPH-dependent 7-cyano-7-deazaguanine reductase of Bacteroides fragilis (strain YCH46).